The sequence spans 370 residues: Holliday junction branch migration complex subunit RuvB (370 aa).

Residues 1–53 are disordered; that stretch reads MAILSSQKQPLEPEPSKNPQSVQQPGLPPSTPEQGLLTAEVSPEERLSRTDDI. The large ATPase domain (RuvB-L) stretch occupies residues 13–214; it reads PEPSKNPQSV…FGLIQRLRFY (202 aa). The span at 43-53 shows a compositional bias: basic and acidic residues; that stretch reads PEERLSRTDDI. Residues I53, R54, G95, K98, T99, T100, 161 to 163, R204, Y214, and R251 each bind ATP; that span reads EDF. T99 contributes to the Mg(2+) binding site. Residues 215 to 285 are small ATPAse domain (RuvB-S); sequence EPEELSQIIL…IASEALQLFN (71 aa). The segment at 288–370 is head domain (RuvB-H); sequence PCGLDWTDRR…TPPDGQLSLL (83 aa). DNA contacts are provided by R343 and R348.

The protein belongs to the RuvB family. In terms of assembly, homohexamer. Forms an RuvA(8)-RuvB(12)-Holliday junction (HJ) complex. HJ DNA is sandwiched between 2 RuvA tetramers; dsDNA enters through RuvA and exits via RuvB. An RuvB hexamer assembles on each DNA strand where it exits the tetramer. Each RuvB hexamer is contacted by two RuvA subunits (via domain III) on 2 adjacent RuvB subunits; this complex drives branch migration. In the full resolvosome a probable DNA-RuvA(4)-RuvB(12)-RuvC(2) complex forms which resolves the HJ.

Its subcellular location is the cytoplasm. The enzyme catalyses ATP + H2O = ADP + phosphate + H(+). Its function is as follows. The RuvA-RuvB-RuvC complex processes Holliday junction (HJ) DNA during genetic recombination and DNA repair, while the RuvA-RuvB complex plays an important role in the rescue of blocked DNA replication forks via replication fork reversal (RFR). RuvA specifically binds to HJ cruciform DNA, conferring on it an open structure. The RuvB hexamer acts as an ATP-dependent pump, pulling dsDNA into and through the RuvAB complex. RuvB forms 2 homohexamers on either side of HJ DNA bound by 1 or 2 RuvA tetramers; 4 subunits per hexamer contact DNA at a time. Coordinated motions by a converter formed by DNA-disengaged RuvB subunits stimulates ATP hydrolysis and nucleotide exchange. Immobilization of the converter enables RuvB to convert the ATP-contained energy into a lever motion, pulling 2 nucleotides of DNA out of the RuvA tetramer per ATP hydrolyzed, thus driving DNA branch migration. The RuvB motors rotate together with the DNA substrate, which together with the progressing nucleotide cycle form the mechanistic basis for DNA recombination by continuous HJ branch migration. Branch migration allows RuvC to scan DNA until it finds its consensus sequence, where it cleaves and resolves cruciform DNA. The protein is Holliday junction branch migration complex subunit RuvB of Cyanothece sp. (strain PCC 7425 / ATCC 29141).